The following is a 182-amino-acid chain: Large ribosomal subunit protein bL25 (182 aa).

The protein belongs to the bacterial ribosomal protein bL25 family. CTC subfamily. In terms of assembly, part of the 50S ribosomal subunit; part of the 5S rRNA/L5/L18/L25 subcomplex. Contacts the 5S rRNA. Binds to the 5S rRNA independently of L5 and L18.

This is one of the proteins that binds to the 5S RNA in the ribosome where it forms part of the central protuberance. The protein is Large ribosomal subunit protein bL25 of Borrelia turicatae (strain 91E135).